The chain runs to 78 residues: MALSRGTFYFGLALFFIVVELPSGSWAGLEYSQSFPGGEFAVCETCRLGRGKCRRTCLDSEKIAGKCKLNFFCCRERI.

The N-terminal stretch at Met-1 to Ala-27 is a signal peptide. Cystine bridges form between Cys-46–Cys-73, Cys-53–Cys-67, and Cys-57–Cys-74.

Belongs to the beta-defensin family.

It is found in the secreted. Functionally, has antibacterial activity. The sequence is that of Beta-defensin 12 (Defb12) from Rattus norvegicus (Rat).